The primary structure comprises 470 residues: Poly(A) polymerase catalytic subunit (470 aa).

Active-site residues include D192 and D194.

The protein belongs to the poxviridae poly(A) polymerase catalytic subunit family. As to quaternary structure, heterodimer of a large (catalytic) subunit and a small (regulatory) subunit.

The catalysed reaction is RNA(n) + ATP = RNA(n)-3'-adenine ribonucleotide + diphosphate. Functionally, polymerase that creates the 3'-poly(A) tail of mRNA's. This is Poly(A) polymerase catalytic subunit (PAPL) from Erythrocebus patas (Red guenon).